The sequence spans 315 residues: Acetyl-coenzyme A carboxylase carboxyl transferase subunit alpha (315 aa).

The region spanning 32–289 is the CoA carboxyltransferase C-terminal domain; the sequence is EIDMLEASLE…KEAFTKQLSE (258 aa).

The protein belongs to the AccA family. Acetyl-CoA carboxylase is a heterohexamer composed of biotin carboxyl carrier protein (AccB), biotin carboxylase (AccC) and two subunits each of ACCase subunit alpha (AccA) and ACCase subunit beta (AccD).

The protein localises to the cytoplasm. It catalyses the reaction N(6)-carboxybiotinyl-L-lysyl-[protein] + acetyl-CoA = N(6)-biotinyl-L-lysyl-[protein] + malonyl-CoA. The protein operates within lipid metabolism; malonyl-CoA biosynthesis; malonyl-CoA from acetyl-CoA: step 1/1. Its function is as follows. Component of the acetyl coenzyme A carboxylase (ACC) complex. First, biotin carboxylase catalyzes the carboxylation of biotin on its carrier protein (BCCP) and then the CO(2) group is transferred by the carboxyltransferase to acetyl-CoA to form malonyl-CoA. In Staphylococcus carnosus (strain TM300), this protein is Acetyl-coenzyme A carboxylase carboxyl transferase subunit alpha.